The sequence spans 471 residues: Sulfate adenylyltransferase subunit 1 (471 aa).

The region spanning 24–240 is the tr-type G domain; the sequence is KSLLRFLTCG…ESADVERELE (217 aa). The G1 stretch occupies residues 33-40; it reads GSVDDGKS. 33–40 is a GTP binding site; that stretch reads GSVDDGKS. Residues 91–95 form a G2 region; sequence GITID. The segment at 112 to 115 is G3; the sequence is DTPG. GTP contacts are provided by residues 112 to 116 and 167 to 170; these read DTPGH and NKMD. Residues 167–170 are G4; that stretch reads NKMD. Positions 204–206 are G5; the sequence is SAL.

It belongs to the TRAFAC class translation factor GTPase superfamily. Classic translation factor GTPase family. CysN/NodQ subfamily. In terms of assembly, heterodimer composed of CysD, the smaller subunit, and CysN.

The enzyme catalyses sulfate + ATP + H(+) = adenosine 5'-phosphosulfate + diphosphate. The protein operates within sulfur metabolism; hydrogen sulfide biosynthesis; sulfite from sulfate: step 1/3. Its function is as follows. With CysD forms the ATP sulfurylase (ATPS) that catalyzes the adenylation of sulfate producing adenosine 5'-phosphosulfate (APS) and diphosphate, the first enzymatic step in sulfur assimilation pathway. APS synthesis involves the formation of a high-energy phosphoric-sulfuric acid anhydride bond driven by GTP hydrolysis by CysN coupled to ATP hydrolysis by CysD. This is Sulfate adenylyltransferase subunit 1 from Aeromonas salmonicida (strain A449).